The primary structure comprises 201 residues: Potassium-transporting ATPase KdpC subunit (201 aa).

The chain crosses the membrane as a helical span at residues 7–27 (PALVLLVALTAITGLAYPLAV).

Belongs to the KdpC family. As to quaternary structure, the system is composed of three essential subunits: KdpA, KdpB and KdpC.

The protein localises to the cell inner membrane. Functionally, part of the high-affinity ATP-driven potassium transport (or Kdp) system, which catalyzes the hydrolysis of ATP coupled with the electrogenic transport of potassium into the cytoplasm. This subunit acts as a catalytic chaperone that increases the ATP-binding affinity of the ATP-hydrolyzing subunit KdpB by the formation of a transient KdpB/KdpC/ATP ternary complex. In Methylorubrum extorquens (strain CM4 / NCIMB 13688) (Methylobacterium extorquens), this protein is Potassium-transporting ATPase KdpC subunit.